We begin with the raw amino-acid sequence, 208 residues long: UPF0323 lipoprotein HH_0014 (208 aa).

Positions 1–26 (MKHIHKIKNYAMVGGLGVMAVFALNA) are cleaved as a signal peptide. C27 carries the N-palmitoyl cysteine lipid modification. The S-diacylglycerol cysteine moiety is linked to residue C27. The tract at residues 148–208 (ANSQRNYKSP…TNRNTGSMGS (61 aa)) is disordered. 2 stretches are compositionally biased toward low complexity: residues 169–185 (SAKT…SGKS) and 193–208 (SSQS…SMGS).

This sequence belongs to the UPF0323 family.

It localises to the cell membrane. The polypeptide is UPF0323 lipoprotein HH_0014 (Helicobacter hepaticus (strain ATCC 51449 / 3B1)).